A 203-amino-acid polypeptide reads, in one-letter code: Small ribosomal subunit protein uS3 (203 aa).

Residues 39 to 113 enclose the KH type-2 domain; the sequence is IREIIRRNFL…NHVLNAKNIA (75 aa).

It belongs to the universal ribosomal protein uS3 family. In terms of assembly, part of the 30S ribosomal subunit. Forms a tight complex with proteins S10 and S14.

In terms of biological role, binds the lower part of the 30S subunit head. Binds mRNA in the 70S ribosome, positioning it for translation. This chain is Small ribosomal subunit protein uS3, found in Carsonella ruddii.